We begin with the raw amino-acid sequence, 98 residues long: Flagellar hook-basal body complex protein FliE (98 aa).

This sequence belongs to the FliE family.

It localises to the bacterial flagellum basal body. This Listeria monocytogenes serovar 1/2a (strain ATCC BAA-679 / EGD-e) protein is Flagellar hook-basal body complex protein FliE.